A 262-amino-acid chain; its full sequence is Taurine import ATP-binding protein TauB (262 aa).

Positions 4-233 (LELERISAQY…RYAAGESARA (230 aa)) constitute an ABC transporter domain. Residue 38 to 45 (GPSGSGKT) coordinates ATP.

Belongs to the ABC transporter superfamily. Taurine importer (TC 3.A.1.17.1) family. The complex is composed of two ATP-binding proteins (TauB), two transmembrane proteins (TauC) and a solute-binding protein (TauA).

It is found in the cell inner membrane. The enzyme catalyses taurine(out) + ATP + H2O = taurine(in) + ADP + phosphate + H(+). Its function is as follows. Part of the ABC transporter complex TauABC involved in taurine import. Responsible for energy coupling to the transport system. The chain is Taurine import ATP-binding protein TauB from Pseudomonas putida (Arthrobacter siderocapsulatus).